A 101-amino-acid polypeptide reads, in one-letter code: Urease subunit beta (101 aa).

Belongs to the urease beta subunit family. In terms of assembly, heterotrimer of UreA (gamma), UreB (beta) and UreC (alpha) subunits. Three heterotrimers associate to form the active enzyme.

The protein resides in the cytoplasm. It carries out the reaction urea + 2 H2O + H(+) = hydrogencarbonate + 2 NH4(+). The protein operates within nitrogen metabolism; urea degradation; CO(2) and NH(3) from urea (urease route): step 1/1. The protein is Urease subunit beta of Jannaschia sp. (strain CCS1).